The chain runs to 103 residues: uncharacterized protein (103 aa).

The span at 1–10 (MVVKKSKPKN) shows a compositional bias: basic residues. 2 disordered regions span residues 1-38 (MVVKKSKPKNQIRVEDLDLPKLNTSKNPQTKIQKKGKK) and 77-103 (AVFSKQSDRKISNNKADKKTGRKNEKK).

This is an uncharacterized protein from Schizosaccharomyces pombe (strain 972 / ATCC 24843) (Fission yeast).